An 86-amino-acid chain; its full sequence is Protein Tat (86 aa).

The tract at residues 1 to 24 (MEPVDPRLEPWKHPGSQPKTACTN) is interaction with human CREBBP. A transactivation region spans residues 1–48 (MEPVDPRLEPWKHPGSQPKTACTNCYCKKCCFHCQVCFITKALGISYG). Zn(2+)-binding residues include C22, C25, and C27. Residues 22 to 37 (CTNCYCKKCCFHCQVC) are cysteine-rich. The residue at position 28 (K28) is an N6-acetyllysine; by host PCAF. The Zn(2+) site is built by C30, H33, C34, and C37. The segment at 38 to 48 (FITKALGISYG) is core. Over residues 48 to 59 (GRKKRRQRRRAH) the composition is skewed to basic residues. Positions 48-86 (GRKKRRQRRRAHQNSQTHQASLSKQPTSQPRGDPTGPKE) are disordered. The Nuclear localization signal, RNA-binding (TAR), and protein transduction motif lies at 49–57 (RKKRRQRRR). The tract at residues 49-86 (RKKRRQRRRAHQNSQTHQASLSKQPTSQPRGDPTGPKE) is interaction with the host capping enzyme RNGTT. K50 and K51 each carry N6-acetyllysine; by host EP300 and GCN5L2. R52 and R53 each carry asymmetric dimethylarginine; by host PRMT6. The span at 60–77 (QNSQTHQASLSKQPTSQP) shows a compositional bias: polar residues. Residue K71 forms a Glycyl lysine isopeptide (Lys-Gly) (interchain with G-Cter in ubiquitin) linkage. Positions 78–80 (RGD) match the Cell attachment site motif.

It belongs to the lentiviruses Tat family. As to quaternary structure, interacts with host CCNT1. Associates with the P-TEFb complex composed at least of Tat, P-TEFb (CDK9 and CCNT1), TAR RNA, RNA Pol II. Recruits the HATs CREBBP, TAF1/TFIID, EP300, PCAF and GCN5L2. Interacts with host KAT5/Tip60; this interaction targets the latter to degradation. Interacts with the host deacetylase SIRT1. Interacts with host capping enzyme RNGTT; this interaction stimulates RNGTT. Binds to host KDR, and to the host integrins ITGAV/ITGB3 and ITGA5/ITGB1. Interacts with host KPNB1/importin beta-1 without previous binding to KPNA1/importin alpha-1. Interacts with EIF2AK2. Interacts with host nucleosome assembly protein NAP1L1; this interaction may be required for the transport of Tat within the nucleus, since the two proteins interact at the nuclear rim. Interacts with host C1QBP/SF2P32; this interaction involves lysine-acetylated Tat. Interacts with the host chemokine receptors CCR2, CCR3 and CXCR4. Interacts with host DPP4/CD26; this interaction may trigger an anti-proliferative effect. Interacts with host LDLR. Interacts with the host extracellular matrix metalloproteinase MMP1. Interacts with host PRMT6; this interaction mediates Tat's methylation. Interacts with, and is ubiquitinated by MDM2/Hdm2. Interacts with host PSMC3 and HTATIP2. Interacts with STAB1; this interaction may overcome SATB1-mediated repression of IL2 and IL2RA (interleukin) in T cells by binding to the same domain than HDAC1. Interacts (when acetylated) with human CDK13, thereby increasing HIV-1 mRNA splicing and promoting the production of the doubly spliced HIV-1 protein Nef. Interacts with host TBP; this interaction modulates the activity of transcriptional pre-initiation complex. Interacts with host RELA. Interacts with host PLSCR1; this interaction negatively regulates Tat transactivation activity by altering its subcellular distribution. In terms of processing, asymmetrical arginine methylation by host PRMT6 seems to diminish the transactivation capacity of Tat and affects the interaction with host CCNT1. Post-translationally, acetylation by EP300, CREBBP, GCN5L2/GCN5 and PCAF regulates the transactivation activity of Tat. EP300-mediated acetylation of Lys-50 promotes dissociation of Tat from the TAR RNA through the competitive binding to PCAF's bromodomain. In addition, the non-acetylated Tat's N-terminus can also interact with PCAF. PCAF-mediated acetylation of Lys-28 enhances Tat's binding to CCNT1. Lys-50 is deacetylated by SIRT1. Polyubiquitination by host MDM2 does not target Tat to degradation, but activates its transactivation function and fosters interaction with CCNT1 and TAR RNA. In terms of processing, phosphorylated by EIF2AK2 on serine and threonine residues adjacent to the basic region important for TAR RNA binding and function. Phosphorylation of Tat by EIF2AK2 is dependent on the prior activation of EIF2AK2 by dsRNA.

It is found in the host nucleus. It localises to the host nucleolus. The protein localises to the host cytoplasm. The protein resides in the secreted. Its function is as follows. Transcriptional activator that increases RNA Pol II processivity, thereby increasing the level of full-length viral transcripts. Recognizes a hairpin structure at the 5'-LTR of the nascent viral mRNAs referred to as the transactivation responsive RNA element (TAR) and recruits the cyclin T1-CDK9 complex (P-TEFb complex) that will in turn hyperphosphorylate the RNA polymerase II to allow efficient elongation. The CDK9 component of P-TEFb and other Tat-activated kinases hyperphosphorylate the C-terminus of RNA Pol II that becomes stabilized and much more processive. Other factors such as HTATSF1/Tat-SF1, SUPT5H/SPT5, and HTATIP2 are also important for Tat's function. Besides its effect on RNA Pol II processivity, Tat induces chromatin remodeling of proviral genes by recruiting the histone acetyltransferases (HATs) CREBBP, EP300 and PCAF to the chromatin. This also contributes to the increase in proviral transcription rate, especially when the provirus integrates in transcriptionally silent region of the host genome. To ensure maximal activation of the LTR, Tat mediates nuclear translocation of NF-kappa-B by interacting with host RELA. Through its interaction with host TBP, Tat may also modulate transcription initiation. Tat can reactivate a latently infected cell by penetrating in it and transactivating its LTR promoter. In the cytoplasm, Tat is thought to act as a translational activator of HIV-1 mRNAs. Functionally, extracellular circulating Tat can be endocytosed by surrounding uninfected cells via the binding to several surface receptors such as CD26, CXCR4, heparan sulfate proteoglycans (HSPG) or LDLR. Neurons are rarely infected, but they internalize Tat via their LDLR. Through its interaction with nuclear HATs, Tat is potentially able to control the acetylation-dependent cellular gene expression. Modulates the expression of many cellular genes involved in cell survival, proliferation or in coding for cytokines or cytokine receptors. Tat plays a role in T-cell and neurons apoptosis. Tat induced neurotoxicity and apoptosis probably contribute to neuroAIDS. Circulating Tat also acts as a chemokine-like and/or growth factor-like molecule that binds to specific receptors on the surface of the cells, affecting many cellular pathways. In the vascular system, Tat binds to ITGAV/ITGB3 and ITGA5/ITGB1 integrins dimers at the surface of endothelial cells and competes with bFGF for heparin-binding sites, leading to an excess of soluble bFGF. This Homo sapiens (Human) protein is Protein Tat.